The chain runs to 204 residues: MPQARWHGPQRRIGVTGGIASGKSSVGLYLSEQHALPLLDADIYARDALVAGSAATMAVLQRYGNAVAEAGQLNPISIDRIALASIIFSDAQERRWLEQLIHPIVAKRFDVALADLSAEPVVVLMIPLLFEAKLSGLCSDVWLVDCSPAQQCQRLIARDGLTLKQAEQRISTQWPLEQKRPLADLVIDNSGAPRAWRDQISSIC.

Positions 12–204 (RIGVTGGIAS…AWRDQISSIC (193 aa)) constitute a DPCK domain. Position 20 to 25 (20 to 25 (ASGKSS)) interacts with ATP.

The protein belongs to the CoaE family.

The protein localises to the cytoplasm. It carries out the reaction 3'-dephospho-CoA + ATP = ADP + CoA + H(+). It participates in cofactor biosynthesis; coenzyme A biosynthesis; CoA from (R)-pantothenate: step 5/5. Its function is as follows. Catalyzes the phosphorylation of the 3'-hydroxyl group of dephosphocoenzyme A to form coenzyme A. The protein is Dephospho-CoA kinase of Prochlorococcus marinus (strain MIT 9313).